A 368-amino-acid polypeptide reads, in one-letter code: DNA replication and repair protein RecF (368 aa).

Position 30 to 37 (30 to 37) interacts with ATP; the sequence is GNNAQGKT.

The protein belongs to the RecF family.

Its subcellular location is the cytoplasm. In terms of biological role, the RecF protein is involved in DNA metabolism; it is required for DNA replication and normal SOS inducibility. RecF binds preferentially to single-stranded, linear DNA. It also seems to bind ATP. This is DNA replication and repair protein RecF from Streptococcus pyogenes serotype M12 (strain MGAS9429).